Consider the following 535-residue polypeptide: Ribonuclease Y (535 aa).

The helical transmembrane segment at 30–50 (IWALPALVIGLAIGAGIGILI) threads the bilayer. A KH domain is found at 225–285 (TVSTVALPSE…VRREVARLAL (61 aa)). The 94-residue stretch at 351 to 444 (VLQHSLECAL…VQAVDAISGG (94 aa)) folds into the HD domain.

It belongs to the RNase Y family.

It is found in the cell membrane. Endoribonuclease that initiates mRNA decay. The polypeptide is Ribonuclease Y (Roseiflexus sp. (strain RS-1)).